A 410-amino-acid polypeptide reads, in one-letter code: Solute carrier family 52, riboflavin transporter, member 3 (410 aa).

3 helical membrane-spanning segments follow: residues 3–23, 40–60, and 73–93; these read ILIY…INGL, LPSY…LVTL, and VVIY…AFFL. A glycan (N-linked (GlcNAc...) asparagine) is linked at Asn-157. The next 6 helical transmembrane spans lie at 158-178, 239-259, 277-297, 301-321, 334-354, and 369-389; these read FTTE…LAAF, FQLT…NGLL, LSAA…MFFP, LVFL…NMAM, ALGE…LSYV, and ALVW…VIMF.

It belongs to the riboflavin transporter family.

The protein resides in the cell membrane. It catalyses the reaction riboflavin(in) = riboflavin(out). Functionally, plasma membrane transporter mediating the uptake by cells of the water soluble vitamin B2/riboflavin that plays a key role in biochemical oxidation-reduction reactions of the carbohydrate, lipid, and amino acid metabolism. The sequence is that of Solute carrier family 52, riboflavin transporter, member 3 (slc52a3) from Osmerus mordax (Rainbow smelt).